The primary structure comprises 199 residues: 7-methyl-GTP pyrophosphatase (199 aa).

D74 acts as the Proton acceptor in catalysis.

Belongs to the Maf family. YceF subfamily. A divalent metal cation serves as cofactor.

Its subcellular location is the cytoplasm. The catalysed reaction is N(7)-methyl-GTP + H2O = N(7)-methyl-GMP + diphosphate + H(+). Nucleoside triphosphate pyrophosphatase that hydrolyzes 7-methyl-GTP (m(7)GTP). May have a dual role in cell division arrest and in preventing the incorporation of modified nucleotides into cellular nucleic acids. The chain is 7-methyl-GTP pyrophosphatase from Cupriavidus pinatubonensis (strain JMP 134 / LMG 1197) (Cupriavidus necator (strain JMP 134)).